Reading from the N-terminus, the 344-residue chain is Protein BIM1 (344 aa).

Residue serine 2 is modified to N-acetylserine. One can recognise a Calponin-homology (CH) domain in the interval 6–107; that stretch reads GESRTELLTW…FLQWLKKHWI (102 aa). The disordered stretch occupies residues 126–173; it reads IITNNSATKPRTVSNPTTAKRSSSTGTGSAMSGGLATRHSSLGINGSR. The span at 127–146 shows a compositional bias: polar residues; it reads ITNNSATKPRTVSNPTTAKR. Residues 147–159 are compositionally biased toward low complexity; that stretch reads SSSTGTGSAMSGG. Serine 157 carries the post-translational modification Phosphoserine. Over residues 163–173 the composition is skewed to polar residues; that stretch reads RHSSLGINGSR. One can recognise an EB1 C-terminal domain in the interval 188-281; that stretch reads ELTKSQETIG…LYATAEGFEM (94 aa). Residues 292-312 are disordered; sequence NLGEHGTVPNQGGYANSNGEV.

This sequence belongs to the MAPRE family.

It localises to the cytoplasm. The protein localises to the cytoskeleton. Functionally, binds microtubules. The protein is Protein BIM1 (BIM1) of Saccharomyces cerevisiae (strain ATCC 204508 / S288c) (Baker's yeast).